Here is a 427-residue protein sequence, read N- to C-terminus: Putative zinc protease AlbF (427 aa).

Zn(2+) is bound at residue histidine 66. Catalysis depends on glutamate 69, which acts as the Proton acceptor. Residues histidine 70 and glutamate 142 each contribute to the Zn(2+) site.

It belongs to the peptidase M16 family. Zn(2+) serves as cofactor.

Required for production of the bacteriocin subtilosin. Could catalyze some step in the processing of presubtilosin. This chain is Putative zinc protease AlbF (albF), found in Bacillus subtilis.